We begin with the raw amino-acid sequence, 248 residues long: Probable transcriptional regulatory protein FTW_1073 (248 aa).

The protein belongs to the TACO1 family.

It is found in the cytoplasm. This chain is Probable transcriptional regulatory protein FTW_1073, found in Francisella tularensis subsp. tularensis (strain WY96-3418).